The sequence spans 216 residues: MDFYYSPRGSGCRTVIMVAKALGVKLNMKLLNTLEKDQLKPEFVKLNPQHTIPTLVDNGFSIWESRAIAVYLVEKYGKDDTLFPKDPKKQALVNQRLYFDMGTLYDSFAKYYYPLFHTGKPGSDEDFKKIESSFEYLNIFLEGQNYVAGDHLTVADIAILSTVSTFEIFDFDLNKYPNVARWYANAKKVTPGWEENWKGAVELKGVFDARQAAAKQ.

Residues 1–80 (MDFYYSPRGS…YLVEKYGKDD (80 aa)) enclose the GST N-terminal domain. Residues 50 to 52 (HTI) and 64 to 66 (ESR) each bind glutathione. The 122-residue stretch at 86 to 207 (DPKKQALVNQ…KGAVELKGVF (122 aa)) folds into the GST C-terminal domain.

Belongs to the GST superfamily. Delta family. As to quaternary structure, homodimer.

The enzyme catalyses RX + glutathione = an S-substituted glutathione + a halide anion + H(+). Its function is as follows. Conjugation of reduced glutathione to a wide number of exogenous and endogenous hydrophobic electrophiles. May be involved in detoxification. This is Glutathione S-transferase D5 from Drosophila melanogaster (Fruit fly).